A 378-amino-acid polypeptide reads, in one-letter code: Metalloendoproteinase 2-MMP (378 aa).

The N-terminal stretch at 1-20 (MRFCVFGFLSLFLIVSPASA) is a signal peptide. A propeptide spans 21-154 (WFFPNSTAVP…SRTHLHAVKR (134 aa)) (activation peptide). Asparagine 25, asparagine 35, asparagine 46, asparagine 79, and asparagine 102 each carry an N-linked (GlcNAc...) asparagine glycan. The Cysteine switch signature appears at 118–125 (PRCGNPDV). Position 120 (cysteine 120) interacts with Zn(2+). Asparagine 127, asparagine 143, and asparagine 203 each carry an N-linked (GlcNAc...) asparagine glycan. Histidine 280 serves as a coordination point for Zn(2+). Glutamate 281 is an active-site residue. The Zn(2+) site is built by histidine 284 and histidine 290. N-linked (GlcNAc...) asparagine glycosylation is present at asparagine 330. The GPI-anchor amidated serine moiety is linked to residue serine 349. A propeptide spans 350–378 (AAWRIDGSSRSTIVSLLLSTVGLVLWFLP) (removed in mature form).

The protein belongs to the peptidase M10A family. Matrix metalloproteinases (MMPs) subfamily. Requires Zn(2+) as cofactor. Mostly expressed in roots, and, to a lower extent, in flowers, leaves and stems.

Its subcellular location is the cell membrane. With respect to regulation, repressed by acetohydroxamic acid (AHA). Functionally, matrix metalloproteinases (MMPs) or matrixins may play a role in the degradation and remodeling of the extracellular matrix (ECM) during development or in response to stresses. Required for plant growth, morphogenesis, and development with particular relevance for flowering and senescence. Active on McaPLGLDpaAR-NH(2) (QF24) and myelin basic protein (MBP) and, to some extent, on beta-casein. This is Metalloendoproteinase 2-MMP from Arabidopsis thaliana (Mouse-ear cress).